The chain runs to 185 residues: Elongation factor P (185 aa).

It belongs to the elongation factor P family.

Its subcellular location is the cytoplasm. The protein operates within protein biosynthesis; polypeptide chain elongation. Involved in peptide bond synthesis. Stimulates efficient translation and peptide-bond synthesis on native or reconstituted 70S ribosomes in vitro. Probably functions indirectly by altering the affinity of the ribosome for aminoacyl-tRNA, thus increasing their reactivity as acceptors for peptidyl transferase. The chain is Elongation factor P from Geobacillus sp. (strain WCH70).